Reading from the N-terminus, the 436-residue chain is Citrate synthase (436 aa).

Residues His313 and Asp371 contribute to the active site.

Belongs to the citrate synthase family. In terms of assembly, homohexamer.

The enzyme catalyses oxaloacetate + acetyl-CoA + H2O = citrate + CoA + H(+). Its pathway is carbohydrate metabolism; tricarboxylic acid cycle; isocitrate from oxaloacetate: step 1/2. This Acetobacter aceti protein is Citrate synthase (aarA).